The primary structure comprises 247 residues: Aliphatic sulfonates import ATP-binding protein SsuB 3 (247 aa).

One can recognise an ABC transporter domain in the interval 13–227; the sequence is VRVRGAGRAF…SVVDPEFSAL (215 aa). ATP is bound at residue 45–52; it reads GASGSGKS.

The protein belongs to the ABC transporter superfamily. Aliphatic sulfonates importer (TC 3.A.1.17.2) family. As to quaternary structure, the complex is composed of two ATP-binding proteins (SsuB), two transmembrane proteins (SsuC) and a solute-binding protein (SsuA).

The protein resides in the cell membrane. It catalyses the reaction ATP + H2O + aliphatic sulfonate-[sulfonate-binding protein]Side 1 = ADP + phosphate + aliphatic sulfonateSide 2 + [sulfonate-binding protein]Side 1.. Functionally, part of the ABC transporter complex SsuABC involved in aliphatic sulfonates import. Responsible for energy coupling to the transport system. The polypeptide is Aliphatic sulfonates import ATP-binding protein SsuB 3 (Nocardia farcinica (strain IFM 10152)).